The chain runs to 329 residues: UDP-sugar transporter sqv-7 (329 aa).

9 helical membrane passes run 15 to 34 (SAVFYGVISVLIVFVNKILL), 41 to 63 (SFLFVGVGQMMATILILFFAKMF), 86 to 108 (YFFNLISGLGGTQMINLPMFTVL), 129 to 151 (SKAVKISVGLMIGGSFIAAIYDL), 155 to 174 (ALGYTMIFINNICTAALGVY), 187 to 209 (YGLMFYNCLFMLLPALCVVQYTG), 224 to 246 (TSSVWTCFLLSCICGFVLNYSLV), 253 to 275 (SALTTTCVGPIKNLFVTYVGMFS), and 280 to 302 (VFQWANFTGINVSVFGSILYTYV).

This sequence belongs to the TPT transporter family. SLC35D subfamily.

The protein resides in the golgi apparatus membrane. Its function is as follows. Acts as a transporter of UDP-glucuronic acid (UDP-GlcA), UDP-N-acetylgalactosamine (UDP-GalNAc) and UDP-galactose (UDP-Gal) from the cytoplasm into the Golgi lumen. Involved in the biosynthesis of glycoconjugates that play a pivotal role in development. Involved in the synthesis of chondroitin sulfate and heparan sulfate proteoglycans. Required for embryonic development. Involved in vulva epithelium invagination and embryonic development. Involved in the directed migration of hermaphrodite-specific neurons. This Caenorhabditis elegans protein is UDP-sugar transporter sqv-7 (sqv-7).